Reading from the N-terminus, the 162-residue chain is NADPH-dependent 7-cyano-7-deazaguanine reductase (162 aa).

Cys53 functions as the Thioimide intermediate in the catalytic mechanism. Asp60 (proton donor) is an active-site residue. Residues Val75–Ser77 and His94–Glu95 each bind substrate.

It belongs to the GTP cyclohydrolase I family. QueF type 1 subfamily.

Its subcellular location is the cytoplasm. It catalyses the reaction 7-aminomethyl-7-carbaguanine + 2 NADP(+) = 7-cyano-7-deazaguanine + 2 NADPH + 3 H(+). It participates in tRNA modification; tRNA-queuosine biosynthesis. Catalyzes the NADPH-dependent reduction of 7-cyano-7-deazaguanine (preQ0) to 7-aminomethyl-7-deazaguanine (preQ1). This is NADPH-dependent 7-cyano-7-deazaguanine reductase from Exiguobacterium sibiricum (strain DSM 17290 / CCUG 55495 / CIP 109462 / JCM 13490 / 255-15).